The primary structure comprises 262 residues: MSDTEEQEYEEEQAEDEEAVEEEEAPEEPEPVAEREEERPKPSRPVVPPLIPPKIPEGERVDFDDIHRKRMEKDLLELQTLIDVHFEQRKKEEEELIALKDRIERRRAERAEQQRFRTEKERERQAKLAEEKMRKEEEEAKKRAEDDAKKKKVLSNMGAHFGGYLVKAEQKRGKRQTGREMKLRILSERKKPLNIDYMGEDQLREKAQELSEWIHQLESEKFDLMEKLKQQKYEINVLYNRISHAQKFRKGAGKGRVGGRWK.

A compositionally biased stretch (acidic residues) spans 1–31 (MSDTEEQEYEEEQAEDEEAVEEEEAPEEPEP). Disordered regions lie at residues 1-62 (MSDT…ERVD) and 109-153 (ERAE…KKKV). Ser-2 is subject to Phosphoserine; by CK2. Basic and acidic residues predominate over residues 32 to 41 (VAEREEERPK). The segment covering 43–55 (SRPVVPPLIPPKI) has biased composition (pro residues). Positions 109 to 149 (ERAEQQRFRTEKERERQAKLAEEKMRKEEEEAKKRAEDDAK) are enriched in basic and acidic residues.

This sequence belongs to the troponin T family. Interacts with TPM3. In terms of tissue distribution, expressed in adult soleus muscle.

Troponin T is the tropomyosin-binding subunit of troponin, the thin filament regulatory complex which confers calcium-sensitivity to striated muscle actomyosin ATPase activity. The chain is Troponin T, slow skeletal muscle (Tnnt1) from Mus musculus (Mouse).